A 117-amino-acid polypeptide reads, in one-letter code: SGSCTLRTCWKKMPHFREVGDRLLERFNGAFKVMAGNDGKSVVPVGHNIKPPDKRDLIYSADSPDFCMANRKTGAPGTKGRLCNSTAMDMGGCDLLCCGRGHREETMVLEENCLCRF.

The O-palmitoleoyl serine; by PORCN moiety is linked to residue serine 1. A disulfide bond links cysteine 83 and cysteine 98. Asparagine 84 carries N-linked (GlcNAc...) asparagine glycosylation.

It belongs to the Wnt family. In terms of processing, palmitoleoylation is required for efficient binding to frizzled receptors. Depalmitoleoylation leads to Wnt signaling pathway inhibition.

Its subcellular location is the secreted. The protein localises to the extracellular space. The protein resides in the extracellular matrix. Its function is as follows. Ligand for members of the frizzled family of seven transmembrane receptors. Probable developmental protein. May be a signaling molecule which affects the development of discrete regions of tissues. Is likely to signal over only few cell diameters. The chain is Protein Wnt-6 (WNT-6) from Plethodon jordani (Red-cheeked salamander).